The following is a 665-amino-acid chain: Target of rapamycin complex 2 subunit sin1 (665 aa).

The residue at position 62 (Ser62) is a Phosphoserine. Polar residues-rich tracts occupy residues 65-83 (IVANDTVSNVRKPSDTKQV) and 100-109 (YATSDLSESS). The tract at residues 65 to 112 (IVANDTVSNVRKPSDTKQVNGAGGQVNHSRAEDSDYATSDLSESSDVG) is disordered. Ser133 bears the Phosphoserine mark. The region spanning 255 to 392 (TSALRALLEH…ATPAQIKENQ (138 aa)) is the CRIM domain. Residues 395–433 (YPFKSKHPTSIPEANNKTHIRHTSSTSSQSQKQAQDVKD) are disordered. Phosphoserine occurs at positions 404, 490, 502, and 530. Residues 517 to 537 (RDKKGSTQQLPTSSPQNSVYG) form a disordered region. Residues 522–536 (STQQLPTSSPQNSVY) are compositionally biased toward polar residues. In terms of domain architecture, SIN1-type PH spans 558–659 (TYQEFLVWKR…IVSRIRALMN (102 aa)).

It belongs to the SIN1 family. As to quaternary structure, the target of rapamycin complex 2 (TORC2) is composed of at least bit61, pop3/wat1, sin1, ste20 and tor1. Interacts with the sty1 MAP kinase. Post-translationally, phosphorylated; under environmental stress. Either Ser-61 or Ser-62 and Ser-298, Ser-299 or Ser-301 are phosphorylated as well.

Component of the mechanistic target of rapamycin complex 2 (mTORC2), which regulates multiple cellular processes to control cell growth in response to environmental signals. In response to signals, TORC2 phosphorylates AGC protein kinase family members, such as gad8. TORC2 is required for cell survival under various stress conditions. TORC2 positively controls G1 cell-cycle arrest, sexual development and amino acid uptake. Positively regulates amino acid uptake through the control of expression of amino acid permeases. Within the mTORC2 complex, sin1 acts as a substrate adapter which recognizes and binds AGC protein kinase family members for phosphorylation by tor1. The protein is Target of rapamycin complex 2 subunit sin1 of Schizosaccharomyces pombe (strain 972 / ATCC 24843) (Fission yeast).